A 130-amino-acid chain; its full sequence is Small ribosomal subunit protein uS8 (130 aa).

Belongs to the universal ribosomal protein uS8 family. As to quaternary structure, part of the 30S ribosomal subunit.

One of the primary rRNA binding proteins, it binds directly to 16S rRNA central domain where it helps coordinate assembly of the platform of the 30S subunit. The sequence is that of Small ribosomal subunit protein uS8 from Pyrococcus furiosus (strain ATCC 43587 / DSM 3638 / JCM 8422 / Vc1).